A 113-amino-acid chain; its full sequence is ATP-dependent Clp protease adapter protein ClpS (113 aa).

It belongs to the ClpS family. In terms of assembly, binds to the N-terminal domain of the chaperone ClpA.

Functionally, involved in the modulation of the specificity of the ClpAP-mediated ATP-dependent protein degradation. The chain is ATP-dependent Clp protease adapter protein ClpS from Leptospira biflexa serovar Patoc (strain Patoc 1 / Ames).